Consider the following 358-residue polypeptide: MATH domain and coiled-coil domain-containing protein At3g58440 (358 aa).

One can recognise an MATH domain in the interval 8–131 (QDKFTWVLEK…NDRLTIVAEV (124 aa)). Residues 250–309 (LRDAGFKVDWLEKKLDQLKEKKEEEMSGLARLHEIEERLQKLKLLFVDLESQLQKEKVEA) adopt a coiled-coil conformation.

The chain is MATH domain and coiled-coil domain-containing protein At3g58440 from Arabidopsis thaliana (Mouse-ear cress).